The following is a 906-amino-acid chain: Nuclear factor NF-kappa-B p100 subunit (906 aa).

Residues 34 to 223 enclose the RHD domain; sequence AVGPYLVIIE…DPIHDSKSPG (190 aa). Positions 336 to 340 match the Nuclear localization signal motif; it reads RNRKK. Residues 345–374 form a GRR region; that stretch reads FPQHFGGGSHMGGAGGAGGFGAGGGGNLSF. ANK repeat units lie at residues 472 to 501, 511 to 540, 544 to 573, 582 to 611, 616 to 646, and 650 to 679; these read NGDT…SIPS, LQQT…NPTL, YGNS…SATP, QGLL…DVNG, GGRT…NVNS, and AGNT…DVQR. 2 disordered regions span residues 677–734 and 857–906; these read VQRE…GPRQ and EPLE…QQVH. A compositionally biased stretch (low complexity) spans 684-695; it reads PVSPSSVRVPSS. Over residues 697 to 708 the composition is skewed to acidic residues; the sequence is TDGDPEEQEQEQ. Residues 771–857 enclose the Death domain; it reads RNHLLSLDTD…GAVRMLRKPE (87 aa).

In terms of assembly, component of the NF-kappa-B RelB-p52 complex. In terms of processing, while translation occurs, the particular unfolded structure after the GRR repeat promotes the generation of p52 making it an acceptable substrate for the proteasome. This process is known as cotranslational processing. The processed form is active and the unprocessed form acts as an inhibitor (I kappa B-like), being able to form cytosolic complexes with NF-kappa B, trapping it in the cytoplasm. Complete folding of the region downstream of the GRR repeat precludes processing. Post-translationally, constitutive processing is tightly suppressed by its C-terminal processing inhibitory domain, named PID, which contains the death domain.

The protein resides in the nucleus. It localises to the cytoplasm. Functionally, NF-kappa-B is a pleiotropic transcription factor present in almost all cell types and is the endpoint of a series of signal transduction events that are initiated by a vast array of stimuli related to many biological processes such as inflammation, immunity, differentiation, cell growth, tumorigenesis and apoptosis. NF-kappa-B is a homo- or heterodimeric complex formed by the Rel-like domain-containing proteins RELA/p65, RELB, NFKB1/p105, NFKB1/p50, REL and NFKB2/p52. The dimers bind at kappa-B sites in the DNA of their target genes and the individual dimers have distinct preferences for different kappa-B sites that they can bind with distinguishable affinity and specificity. Different dimer combinations act as transcriptional activators or repressors, respectively. NF-kappa-B is controlled by various mechanisms of post-translational modification and subcellular compartmentalization as well as by interactions with other cofactors or corepressors. NF-kappa-B complexes are held in the cytoplasm in an inactive state complexed with members of the NF-kappa-B inhibitor (I-kappa-B) family. In a conventional activation pathway, I-kappa-B is phosphorylated by I-kappa-B kinases (IKKs) in response to different activators, subsequently degraded thus liberating the active NF-kappa-B complex which translocates to the nucleus. In a non-canonical activation pathway, the MAP3K14-activated CHUK/IKKA homodimer phosphorylates NFKB2/p100 associated with RelB, inducing its proteolytic processing to NFKB2/p52 and the formation of NF-kappa-B RelB-p52 complexes. The NF-kappa-B heterodimeric RelB-p52 complex is a transcriptional activator. NFKB2 appears to have dual functions such as cytoplasmic retention of attached NF-kappa-B proteins by p100 and generation of p52 by a cotranslational processing. The proteasome-mediated process ensures the production of both p52 and p100 and preserves their independent function. p52 binds to the kappa-B consensus sequence 5'-GGRNNYYCC-3', located in the enhancer region of genes involved in immune response and acute phase reactions. In concert with RELB, may play a role in the regulation of the circadian clock. The protein is Nuclear factor NF-kappa-B p100 subunit (NFKB2) of Gallus gallus (Chicken).